Reading from the N-terminus, the 407-residue chain is Serine/threonine transporter SstT (407 aa).

9 helical membrane-spanning segments follow: residues 10–30, 42–62, 81–101, 141–161, 179–199, 218–238, 245–267, 288–308, and 316–336; these read AKGN…LIGI, LGIL…FILI, IIIL…LANF, ALSS…GAAL, VLKI…GLVA, ILLV…IVFF, FPLI…SSAA, ISIP…IAIL, and VGIE…TFAA.

It belongs to the dicarboxylate/amino acid:cation symporter (DAACS) (TC 2.A.23) family.

Its subcellular location is the cell inner membrane. The catalysed reaction is L-serine(in) + Na(+)(in) = L-serine(out) + Na(+)(out). The enzyme catalyses L-threonine(in) + Na(+)(in) = L-threonine(out) + Na(+)(out). Its function is as follows. Involved in the import of serine and threonine into the cell, with the concomitant import of sodium (symport system). This Campylobacter jejuni subsp. doylei (strain ATCC BAA-1458 / RM4099 / 269.97) protein is Serine/threonine transporter SstT.